The chain runs to 423 residues: Sorting nexin-4 (423 aa).

Basic and acidic residues predominate over residues 1 to 21 (MTDKGKNDLTSKAKDKARGNP). A disordered region spans residues 1-25 (MTDKGKNDLTSKAKDKARGNPEKPP). In terms of domain architecture, PX spans 29–157 (EIIVSDPQKR…TFLVSKDWES (129 aa)). Positions 78, 80, 104, and 123 each coordinate a 1,2-diacyl-sn-glycero-3-phospho-(1D-myo-inositol-3-phosphate). Coiled coils occupy residues 217–252 (KKNDSMSEDYTKLGSNLQELQELVTGENEELAAKLK) and 346–381 (SRREKINKLEGKITSLTGELENAKKVADGFEQECLK).

This sequence belongs to the sorting nexin family. As to quaternary structure, forms a complex with ATG20 and ATG17. Binds also to SNC1 and SNX41.

The protein localises to the cytoplasm. It localises to the cytosol. Its subcellular location is the preautophagosomal structure membrane. It is found in the endosome membrane. In terms of biological role, sorting nexin, involved in the separation or division of vacuoles throughout the entire life cycle of the cells. Involved in retrieval of late-Golgi SNAREs from post-Golgi endosomes to the trans-Golgi network, for cytoplasm to vacuole transport (Cvt), and autophagy of large cargos including mitophagy, pexophagy and glycophagy. Involved in proper sorting of the v-SNARE protein SNC1. The sequence is that of Sorting nexin-4 from Saccharomyces cerevisiae (strain ATCC 204508 / S288c) (Baker's yeast).